Reading from the N-terminus, the 735-residue chain is Nuclear intron maturase 2, mitochondrial (735 aa).

The N-terminal 12 residues, 1–12 (MRRSFSVLGPYK), are a transit peptide targeting the mitochondrion. Residues 161–460 (RDKTDYESLS…KGIMFLDHVL (300 aa)) enclose the Reverse transcriptase domain. The segment at 485–653 (GTLLSVTASL…KFLIEYLTLD (169 aa)) is intron maturase type-2. Residues 707–735 (SSTYNRDNDDQKNKEEDEDSEDGLRIARM) are disordered. Residues 712–721 (RDNDDQKNKE) are compositionally biased toward basic and acidic residues.

It belongs to the plant nuclear intron maturase (nMat) family. As to quaternary structure, associated to a large ribonucleoprotein complex in mitochondria containing group-II intron RNAs.

The protein resides in the mitochondrion. Functionally, nuclear-encoded maturase required for splicing of group-II introns in mitochondria. Involved in the splicing of mitochondrial COX2, NAD1 and NAD7 transcripts. Necessary for mitochondrial biogenesis during early developmental stages. This is Nuclear intron maturase 2, mitochondrial from Arabidopsis thaliana (Mouse-ear cress).